A 337-amino-acid polypeptide reads, in one-letter code: Primase homolog protein (337 aa).

Positions 205 to 304 (SEIIIVEGEP…WLVKWPKKSE (100 aa)) constitute a Toprim domain. Mg(2+)-binding residues include E211, D273, and D275.

It depends on Mg(2+) as a cofactor.

May act as a DNA primase. This chain is Primase homolog protein, found in Arabidopsis thaliana (Mouse-ear cress).